A 445-amino-acid polypeptide reads, in one-letter code: UPF0210 protein SPT_0285 (445 aa).

The protein belongs to the UPF0210 family. As to quaternary structure, homodimer.

This chain is UPF0210 protein SPT_0285, found in Streptococcus pneumoniae (strain Taiwan19F-14).